The primary structure comprises 195 residues: Transcription factor LBX2 (195 aa).

Disordered regions lie at residues 1–89 and 164–195; these read MNSV…KSRT and PALPDSTSSPDPGPSGPDSEPNLSDEEIQVDD. Positions 84–143 form a DNA-binding region, homeobox; it reads RRKSRTAFTAQQVLELERRFVFQKYLAPSERDGLAARLGLANAQVVTWFQNRRAKLKRDV. Over residues 186–195 the composition is skewed to acidic residues; the sequence is LSDEEIQVDD.

Expressed in the developing urogenital system, eye and brain.

The protein localises to the nucleus. Its function is as follows. Transcription factor. This Mus musculus (Mouse) protein is Transcription factor LBX2 (Lbx2).